Here is an 84-residue protein sequence, read N- to C-terminus: Small ribosomal subunit protein uS17 (84 aa).

This sequence belongs to the universal ribosomal protein uS17 family. Part of the 30S ribosomal subunit.

Functionally, one of the primary rRNA binding proteins, it binds specifically to the 5'-end of 16S ribosomal RNA. In Hamiltonella defensa subsp. Acyrthosiphon pisum (strain 5AT), this protein is Small ribosomal subunit protein uS17.